The chain runs to 213 residues: ATP phosphoribosyltransferase (213 aa).

The protein belongs to the ATP phosphoribosyltransferase family. Short subfamily. Heteromultimer composed of HisG and HisZ subunits.

It localises to the cytoplasm. It carries out the reaction 1-(5-phospho-beta-D-ribosyl)-ATP + diphosphate = 5-phospho-alpha-D-ribose 1-diphosphate + ATP. It participates in amino-acid biosynthesis; L-histidine biosynthesis; L-histidine from 5-phospho-alpha-D-ribose 1-diphosphate: step 1/9. In terms of biological role, catalyzes the condensation of ATP and 5-phosphoribose 1-diphosphate to form N'-(5'-phosphoribosyl)-ATP (PR-ATP). Has a crucial role in the pathway because the rate of histidine biosynthesis seems to be controlled primarily by regulation of HisG enzymatic activity. The polypeptide is ATP phosphoribosyltransferase (Bacillus licheniformis (strain ATCC 14580 / DSM 13 / JCM 2505 / CCUG 7422 / NBRC 12200 / NCIMB 9375 / NCTC 10341 / NRRL NRS-1264 / Gibson 46)).